The following is a 90-amino-acid chain: CRISPR-associated endonuclease Cas2 2 (90 aa).

Aspartate 11 is a binding site for Mg(2+).

This sequence belongs to the CRISPR-associated endoribonuclease Cas2 protein family. Homodimer, forms a heterotetramer with a Cas1 homodimer. Mn(2+) serves as cofactor. The cofactor is Mg(2+).

Its activity is regulated as follows. Inhibited by EDTA and at pH 6.0. Its function is as follows. CRISPR (clustered regularly interspaced short palindromic repeat), is an adaptive immune system that provides protection against mobile genetic elements (viruses, transposable elements and conjugative plasmids). CRISPR clusters contain sequences complementary to antecedent mobile elements and target invading nucleic acids. CRISPR clusters are transcribed and processed into CRISPR RNA (crRNA). Involved in the integration of spacer DNA into the CRISPR cassette. Functions as a dsDNA endonuclease and as a weak ssRNase. In Thermus thermophilus (strain ATCC BAA-163 / DSM 7039 / HB27), this protein is CRISPR-associated endonuclease Cas2 2 (cas2b).